A 523-amino-acid chain; its full sequence is ADP-ribosylation factor GTPase-activating protein 3 (523 aa).

In terms of domain architecture, Arf-GAP spans 10–126; it reads LAIFKRLRSV…IKTLATQATR (117 aa). The C4-type zinc-finger motif lies at 25–48; the sequence is CFDCGAKNPSWASISYGVFLCIDC. Residues 162–206 are disordered; sequence GAMQASAQPESASSTPWGLETTPEKHEGGPGQGPSVEGLNTPGKA. Residues 164 to 177 are compositionally biased toward polar residues; the sequence is MQASAQPESASSTP. Phosphoserine occurs at positions 231 and 241. The interval 248–269 is disordered; sequence QAQAVDKRKEQEDLARGAPKEE. S270, S274, and S331 each carry phosphoserine. The disordered stretch occupies residues 308 to 424; sequence GFGSCRSGIS…YEPIGSTDEA (117 aa). The segment covering 314-332 has biased composition (polar residues); that stretch reads SGISHSVTSDMQTIEQESP. Residues 348-361 are compositionally biased toward low complexity; sequence SYFSSSSKWSEQSS. S377 carries the phosphoserine modification. Residues 385–396 are compositionally biased toward basic and acidic residues; it reads YWKKDSSRDPEP. S435, S458, S460, S462, S464, and S465 each carry phosphoserine.

Its subcellular location is the cytoplasm. It is found in the golgi apparatus membrane. Its activity is regulated as follows. GAP activity stimulated by phosphatidylinositol 4,5-bisphosphate (PIP2). In terms of biological role, GTPase-activating protein (GAP) for ADP ribosylation factor 1 (ARF1). Hydrolysis of ARF1-bound GTP may lead to dissociation of coatomer from Golgi-derived membranes to allow fusion with target membranes. In Mus musculus (Mouse), this protein is ADP-ribosylation factor GTPase-activating protein 3 (Arfgap3).